A 790-amino-acid polypeptide reads, in one-letter code: MGTRKKVHAFVRVKPTDDFAHEMIRYGDDKRSIDIHLKKDIRRGVVNNQQTDWSFKLDGVLHDASQDLVYETVAKDVVSQALDGYNGTIMCYGQTGAGKTYTMMGATENYKHRGILPRALQQVFRMIEERPTHAITVRVSYLEIYNESLFDLLSTLPYVGPSVTPMTIVENPQGVFIKGLSVHLTSQEEDAFSLLFEGETNRIIASHTMNKNSSRSHCIFTIYLEAHSRTLSEEKYITSKINLVDLAGSERLGKSGSEGQVLKEATYINKSLSFLEQAIIALGDQKRDHIPFRQCKLTHALKDSLGGNCNMVLVTNIYGEAAQLEETLSSLRFASRMKLVTTEPAINEKYDAERMVKNLEKELALLKQELAIHDSLTNRTFVTYDPMDEIQIAEINSQVRRYLEGTLDEIDIISLRQIKEVFNQFRVVLSQQEQEVESTLRRKYTLIDRNDFAAISAIQKAGLVDVDGHLVGEPEGQNFGLGVAPFSTKPGKKAKSKKTFKEPLSSLARKEGASSPVNGKDLDYVSTSKTQLVPSSKDGDVKDMLSRDRETSSIEPLPSDSPKEELRPIRPDTPPSKPVAFEEFKNEQGSEINRIFKENKSILNERRKRASETTQHINAIKREIDVTKEALNFQKSLREKQGKYENKGLMIIDEEEFLLILKLKDLKKQYRSEYQDLRDLRAEIQYCQHLVDQCRHRLLMEFDIWYNESFVIPEDMQMALKPGGSIRPGMVPVNRIVSLGEDDQDKFSQLQQRVLPEGPDSISFYNAKVKIEQKHNYLKTMMGLQQAHRK.

The Kinesin motor domain occupies 6–340; that stretch reads KVHAFVRVKP…LRFASRMKLV (335 aa). ATP is bound by residues 12–14 and 93–100; these read RVK and GQTGAGKT. The stretch at 342 to 380 forms a coiled coil; sequence TEPAINEKYDAERMVKNLEKELALLKQELAIHDSLTNRT. Residues 477-578 are disordered; that stretch reads QNFGLGVAPF…IRPDTPPSKP (102 aa). The span at 525 to 534 shows a compositional bias: polar residues; the sequence is VSTSKTQLVP. At Thr530 the chain carries Phosphothreonine. Basic and acidic residues-rich tracts occupy residues 537-552 and 561-570; these read KDGD…RETS and SPKEELRPIR. Phosphoserine is present on Ser546. Residues 658–690 are a coiled coil; the sequence is LLILKLKDLKKQYRSEYQDLRDLRAEIQYCQHL.

Belongs to the TRAFAC class myosin-kinesin ATPase superfamily. Kinesin family. In terms of assembly, interacts with HYDIN.

It is found in the cytoplasm. The protein resides in the cytoskeleton. It localises to the cell projection. Its subcellular location is the cilium. The protein localises to the flagellum. It is found in the flagellum axoneme. Functionally, essential for normal male fertility and for progressive motility of spermatozoa. The protein is Kinesin-like protein KIF9 (KIF9) of Homo sapiens (Human).